Reading from the N-terminus, the 529-residue chain is Glycylpeptide N-tetradecanoyltransferase (529 aa).

Over residues 1–10 (MSEQEGNQSE) the composition is skewed to polar residues. A disordered region spans residues 1–65 (MSEQEGNQSE…ANPATKLTPS (65 aa)). Residues 11–23 (HQSEHVGESEGKL) are compositionally biased toward basic and acidic residues. Polar residues predominate over residues 26-40 (ETPTTSQSTNASTGT). Tetradecanoyl-CoA-binding positions include 118–121 (FKFW), 252–254 (LCV), and 260–264 (SKRLT). Catalysis depends on V529, which acts as the Proton acceptor; via carboxylate.

This sequence belongs to the NMT family. In terms of assembly, monomer.

It is found in the cytoplasm. The catalysed reaction is N-terminal glycyl-[protein] + tetradecanoyl-CoA = N-tetradecanoylglycyl-[protein] + CoA + H(+). Adds a myristoyl group to the N-terminal glycine residue of certain cellular proteins. This Ajellomyces capsulatus (Darling's disease fungus) protein is Glycylpeptide N-tetradecanoyltransferase.